The chain runs to 150 residues: MKLILTAAVENLGVAGDIVEVKDGYGRNLLLPRGLAIPATPGAEKQIEGIKRAQEARAIRDLDHAREVKAQLEALEGVKVAVRTSESGKLFGSVKADDIVDAVKAAGGPNLDKRAIVLPKNLVKTTGKYQVEAKIHEGIVSRVKFEVVAA.

This sequence belongs to the bacterial ribosomal protein bL9 family.

Its function is as follows. Binds to the 23S rRNA. This is Large ribosomal subunit protein bL9 from Corynebacterium efficiens (strain DSM 44549 / YS-314 / AJ 12310 / JCM 11189 / NBRC 100395).